The sequence spans 1548 residues: Zinc finger MYM-type protein 4 (1548 aa).

The residue at position 2 (Ala-2) is an N-acetylalanine. The residue at position 107 (Thr-107) is a Phosphothreonine. Residues Ser-110 and Ser-122 each carry the phosphoserine modification. Residues Lys-140 and Lys-149 each participate in a glycyl lysine isopeptide (Lys-Gly) (interchain with G-Cter in SUMO2) cross-link. The residue at position 162 (Ser-162) is a Phosphoserine. The interval Ser-162 to Asp-189 is disordered. A Glycyl lysine isopeptide (Lys-Gly) (interchain with G-Cter in SUMO2) cross-link involves residue Lys-195. Phosphoserine is present on Ser-197. Glycyl lysine isopeptide (Lys-Gly) (interchain with G-Cter in SUMO2) cross-links involve residues Lys-201 and Lys-232. Phosphoserine is present on Ser-242. Lys-250 participates in a covalent cross-link: Glycyl lysine isopeptide (Lys-Gly) (interchain with G-Cter in SUMO1); alternate. Lys-250 is covalently cross-linked (Glycyl lysine isopeptide (Lys-Gly) (interchain with G-Cter in SUMO2); alternate). Residues Lys-260, Lys-271, Lys-273, Lys-289, Lys-327, Lys-400, Lys-428, and Lys-430 each participate in a glycyl lysine isopeptide (Lys-Gly) (interchain with G-Cter in SUMO2) cross-link. MYM-type zinc fingers lie at residues Gln-362–Val-402, Lys-414–Val-457, His-464–Gln-499, Lys-510–Ile-544, Glu-554–Leu-592, Arg-600–Gly-631, Phe-708–Val-742, Lys-749–Asn-788, and Glu-795–Leu-829. Residue Ser-1030 is modified to Phosphoserine. Glycyl lysine isopeptide (Lys-Gly) (interchain with G-Cter in SUMO2) cross-links involve residues Lys-1035 and Lys-1061. A phosphoserine mark is found at Ser-1064 and Ser-1071. Residues Lys-1080 and Lys-1127 each participate in a glycyl lysine isopeptide (Lys-Gly) (interchain with G-Cter in SUMO2) cross-link. Over residues Ser-1124 to Thr-1134 the composition is skewed to basic and acidic residues. Disordered regions lie at residues Ser-1124–Val-1183 and Lys-1231–Ser-1260. Residues Ser-1160–Ser-1181 are compositionally biased toward basic residues. 2 positions are modified to phosphoserine: Ser-1181 and Ser-1256. Positions Gln-1237–Ser-1260 are enriched in polar residues. Lys-1431 is covalently cross-linked (Glycyl lysine isopeptide (Lys-Gly) (interchain with G-Cter in SUMO2)). 3 positions are modified to phosphoserine: Ser-1539, Ser-1542, and Ser-1547.

As to expression, expressed at higher level in heart, skeletal muscle, kidney and liver.

Functionally, plays a role in the regulation of cell morphology and cytoskeletal organization. The protein is Zinc finger MYM-type protein 4 (ZMYM4) of Homo sapiens (Human).